The chain runs to 802 residues: Leucine--tRNA ligase (802 aa).

A 'HIGH' region motif is present at residues 40 to 51 (PYPSGAGLHVGH). The 'KMSKS' region motif lies at 576–580 (KMSKS). Lysine 579 is a binding site for ATP.

Belongs to the class-I aminoacyl-tRNA synthetase family.

The protein resides in the cytoplasm. It carries out the reaction tRNA(Leu) + L-leucine + ATP = L-leucyl-tRNA(Leu) + AMP + diphosphate. This is Leucine--tRNA ligase from Bacillus cereus (strain ATCC 10987 / NRS 248).